The primary structure comprises 86 residues: Kappa-theraphotoxin-Cg1a 2 (86 aa).

Residues 1–21 (MKVSVVITLAVLGVMFVWASA) form the signal peptide. A propeptide spanning residues 22-50 (AELEERGSDQRDSPAWLKSMERIFQSEER) is cleaved from the precursor. 3 cysteine pairs are disulfide-bonded: C52–C66, C59–C71, and C65–C78. Position 84 is a phenylalanine amide (F84).

It belongs to the neurotoxin 10 (Hwtx-1) family. 28 (Jztx-11) subfamily. As to expression, expressed by the venom gland.

It localises to the secreted. In terms of biological role, this toxin acts as a voltage-dependent gating-modifier. It inhibits the sodium conductance (IC(50)=124 nM) and slows the fast inactivation (EC(50)=1180 nM) of Nav1.5/SCN5A. It significantly shifts the activation to more depolarized voltages and decreases the deactivation of Nav1.5 currents upon extreme depolarization, but only slightly affects voltage-dependence of steady-state inactivation. In addition, this toxin causes an approximately five-fold decrease in the rate of recovery from inactivation and an approximately 1.9-fold reduction in the closed-state inactivation rate. This toxin integrates the functions of site 3 toxins (alpha-scorpion toxins) with site 4 toxins (beta-scorpion and spider toxins) by targeting multiple sites on Nav1.5. Also shows inhibition of voltage-gated potassium channels (5 uM completely inhibits Kv2.1/KCNB1, whereas 5 uM moderately inhibits Kv4.2/KCND2 Kv4.1/KCND1 channels). In Chilobrachys guangxiensis (Chinese earth tiger tarantula), this protein is Kappa-theraphotoxin-Cg1a 2.